A 590-amino-acid chain; its full sequence is Probable metalloendopeptidase G1-type (590 aa).

Histidine 41 contributes to the Zn(2+) binding site. Glutamate 44 is a catalytic residue. Residue histidine 45 participates in Zn(2+) binding.

This sequence belongs to the peptidase M44 family. Requires Zn(2+) as cofactor.

Its function is as follows. Seems to be involved in viral proteins maturation by cleavage at Ala-Gly-|-Xaa motifs. This Homo sapiens (Human) protein is Probable metalloendopeptidase G1-type.